The chain runs to 602 residues: Myotubularin (602 aa).

Residues 1–16 show a composition bias toward polar residues; it reads MATSSTPKYNSNSLEN. The interval 1-33 is disordered; that stretch reads MATSSTPKYNSNSLENSVRRSPGDGINHEQNDE. Positions 17-33 are enriched in basic and acidic residues; sequence SVRRSPGDGINHEQNDE. Residues 28–96 form the GRAM domain; the sequence is HEQNDEISRL…GVIARIEKMG (69 aa). In terms of domain architecture, Myotubularin phosphatase spans 162–537; that stretch reads GWAVYDAMTE…RHLELWVNYY (376 aa). A 1,2-diacyl-sn-glycero-3-phospho-(1D-myo-inositol-3,5-bisphosphate) contacts are provided by Asn287, Asn312, and Ile313. Positions 287, 312, and 313 each coordinate a 1,2-diacyl-sn-glycero-3-phospho-(1D-myo-inositol-3-phosphate). Cys374 serves as the catalytic Phosphocysteine intermediate. A 1,2-diacyl-sn-glycero-3-phospho-(1D-myo-inositol-3,5-bisphosphate)-binding residues include Ser375, Asp376, Gly377, Trp378, Asp379, Arg380, Lys416, and Arg420. 6 residues coordinate a 1,2-diacyl-sn-glycero-3-phospho-(1D-myo-inositol-3-phosphate): Ser375, Asp376, Gly377, Trp378, Asp379, and Arg380. Arg420 contacts a 1,2-diacyl-sn-glycero-3-phospho-(1D-myo-inositol-3-phosphate). The segment at 577-602 is disordered; sequence NSPKINRSTTSPSSPSQMMPQVQTPF. Low complexity predominate over residues 584-602; the sequence is STTSPSSPSQMMPQVQTPF.

It belongs to the protein-tyrosine phosphatase family. Non-receptor class myotubularin subfamily.

It is found in the cytoplasm. It localises to the cell membrane. The protein localises to the cell projection. The protein resides in the filopodium. Its subcellular location is the ruffle. It is found in the late endosome. It localises to the myofibril. The protein localises to the sarcomere. It catalyses the reaction a 1,2-diacyl-sn-glycero-3-phospho-(1D-myo-inositol-3-phosphate) + H2O = a 1,2-diacyl-sn-glycero-3-phospho-(1D-myo-inositol) + phosphate. The enzyme catalyses a 1,2-diacyl-sn-glycero-3-phospho-(1D-myo-inositol-3,5-bisphosphate) + H2O = a 1,2-diacyl-sn-glycero-3-phospho-(1D-myo-inositol-5-phosphate) + phosphate. The catalysed reaction is 1,2-dioctanoyl-sn-glycero-3-phospho-(1-D-myo-inositol-3-phosphate) + H2O = 1,2-dioctanoyl-sn-glycero-3-phospho-(1D-myo-inositol) + phosphate. It carries out the reaction 1,2-dioctanoyl-sn-glycero-3-phospho-(1D-myo-inositol-3,5-bisphosphate) + H2O = 1,2-dioctanoyl-sn-glycero-3-phospho-(1D-myo-inositol-5-phosphate) + phosphate. It catalyses the reaction 1,2-dihexadecanoyl-sn-glycero-3-phospho-(1D-myo-inositol-3,5-phosphate) + H2O = 1,2-dihexadecanoyl-sn-glycero-3-phospho-(1D-myo-inositol-5-phosphate) + phosphate. In terms of biological role, lipid phosphatase which dephosphorylates phosphatidylinositol 3-monophosphate (PI3P) and phosphatidylinositol 3,5-bisphosphate (PI(3,5)P2). The protein is Myotubularin (mtm1) of Xenopus laevis (African clawed frog).